A 115-amino-acid chain; its full sequence is Large ribosomal subunit protein bL20 (115 aa).

It belongs to the bacterial ribosomal protein bL20 family.

Functionally, binds directly to 23S ribosomal RNA and is necessary for the in vitro assembly process of the 50S ribosomal subunit. It is not involved in the protein synthesizing functions of that subunit. The protein is Large ribosomal subunit protein bL20 of Mycoplasmoides gallisepticum (strain R(low / passage 15 / clone 2)) (Mycoplasma gallisepticum).